The chain runs to 134 residues: Small ribosomal subunit protein uS8 (134 aa).

Belongs to the universal ribosomal protein uS8 family. Part of the 30S ribosomal subunit. Contacts proteins S5 and S12.

In terms of biological role, one of the primary rRNA binding proteins, it binds directly to 16S rRNA central domain where it helps coordinate assembly of the platform of the 30S subunit. The protein is Small ribosomal subunit protein uS8 of Pseudothermotoga lettingae (strain ATCC BAA-301 / DSM 14385 / NBRC 107922 / TMO) (Thermotoga lettingae).